Reading from the N-terminus, the 306-residue chain is Serine/threonine-protein phosphatase PP-X homolog 4 (306 aa).

4 residues coordinate Mn(2+): aspartate 53, histidine 55, aspartate 81, and asparagine 113. Catalysis depends on histidine 114, which acts as the Proton donor. 2 residues coordinate Mn(2+): histidine 163 and histidine 237.

It belongs to the PPP phosphatase family. PP-4 (PP-X) subfamily. Mn(2+) serves as cofactor.

It carries out the reaction O-phospho-L-seryl-[protein] + H2O = L-seryl-[protein] + phosphate. The catalysed reaction is O-phospho-L-threonyl-[protein] + H2O = L-threonyl-[protein] + phosphate. The chain is Serine/threonine-protein phosphatase PP-X homolog 4 (Ppx4) from Paramecium tetraurelia.